Consider the following 373-residue polypeptide: Cytoplasmic tRNA 2-thiolation protein 1 (373 aa).

Belongs to the TtcA family. CTU1/NCS6/ATPBD3 subfamily.

The protein localises to the cytoplasm. The protein operates within tRNA modification; 5-methoxycarbonylmethyl-2-thiouridine-tRNA biosynthesis. Plays a central role in 2-thiolation of mcm(5)S(2)U at tRNA wobble positions of tRNA(Lys), tRNA(Glu) and tRNA(Gln). Directly binds tRNAs and probably acts by catalyzing adenylation of tRNAs, an intermediate required for 2-thiolation. It is unclear whether it acts as a sulfurtransferase that transfers sulfur from thiocarboxylated URM1 onto the uridine of tRNAs at wobble position. Prior mcm(5) tRNA modification by the elongator complex is required for 2-thiolation. May also be involved in protein urmylation. This Malassezia globosa (strain ATCC MYA-4612 / CBS 7966) (Dandruff-associated fungus) protein is Cytoplasmic tRNA 2-thiolation protein 1.